The primary structure comprises 105 residues: MPPLIPGELIPEPGTLELNSNRPTLTLRVANSGDRPIQVGSHFHFFETNTALHFDRDAARGHRLDIPAGTAIRFEPGDERDVRLVALAGHRKVFGFNGLVNGPLD.

This sequence belongs to the urease beta subunit family. As to quaternary structure, heterotrimer of UreA (gamma), UreB (beta) and UreC (alpha) subunits. Three heterotrimers associate to form the active enzyme.

It is found in the cytoplasm. The catalysed reaction is urea + 2 H2O + H(+) = hydrogencarbonate + 2 NH4(+). Its pathway is nitrogen metabolism; urea degradation; CO(2) and NH(3) from urea (urease route): step 1/1. The polypeptide is Urease subunit beta (Prochlorococcus marinus (strain MIT 9313)).